We begin with the raw amino-acid sequence, 294 residues long: Sarcotoxin II-2 (294 aa).

Residues 1–22 (MKSFVFFAACFAIVALNSLAHA) form the signal peptide. Residues 23–24 (YP) constitute a propeptide, removed by a dipeptidylpeptidase. Gln25 is subject to Pyrrolidone carboxylic acid. Residue Arg293 is modified to Arginine amide.

Belongs to the attacin/sarcotoxin-2 family. In terms of tissue distribution, synthesized by the fat body and is eventually secreted into the hemolymph.

Its subcellular location is the secreted. Functionally, sarcotoxin II is an antibacterial protein which plays a role in the inflammatory response of this insect. The main effect of sarcotoxin II on E.coli may be the inhibition of cell wall synthesis, including septum formation. This chain is Sarcotoxin II-2, found in Sarcophaga peregrina (Flesh fly).